The chain runs to 172 residues: Putative RNA polymerase II transcriptional coactivator (172 aa).

Disordered stretches follow at residues 1–43 (MPPK…QDGN) and 123–172 (QTDA…DDDE). Polar residues predominate over residues 24-43 (GNTGKAQPQELTKGSDQDGN). Positions 131-144 (PKVKALESNKESIK) are enriched in basic and acidic residues. Residues 158-172 (TSDEEEAAEDEDDDE) are compositionally biased toward acidic residues.

Belongs to the transcriptional coactivator PC4 family.

The protein resides in the nucleus. In terms of biological role, general coactivator that functions cooperatively with TAFs and mediates functional interactions between upstream activators and the general transcriptional machinery. Binds single-stranded DNA. The polypeptide is Putative RNA polymerase II transcriptional coactivator (Neurospora crassa (strain ATCC 24698 / 74-OR23-1A / CBS 708.71 / DSM 1257 / FGSC 987)).